The sequence spans 349 residues: tRNA pseudouridine synthase D (349 aa).

Position 27 (F27) interacts with substrate. The Nucleophile role is filled by D80. N129 is a binding site for substrate. Positions 155-303 constitute a TRUD domain; it reads GVPNYFGAQR…VEAARRAMLL (149 aa). Substrate is bound at residue F329.

This sequence belongs to the pseudouridine synthase TruD family.

It catalyses the reaction uridine(13) in tRNA = pseudouridine(13) in tRNA. In terms of biological role, responsible for synthesis of pseudouridine from uracil-13 in transfer RNAs. This is tRNA pseudouridine synthase D from Shigella flexneri.